The sequence spans 222 residues: 7-cyano-7-deazaguanine synthase (222 aa).

ATP is bound at residue Ile9 to Ala19. Residues Cys188, Cys196, Cys199, and Cys202 each contribute to the Zn(2+) site.

This sequence belongs to the QueC family. The cofactor is Zn(2+).

The catalysed reaction is 7-carboxy-7-deazaguanine + NH4(+) + ATP = 7-cyano-7-deazaguanine + ADP + phosphate + H2O + H(+). The protein operates within purine metabolism; 7-cyano-7-deazaguanine biosynthesis. Its function is as follows. Catalyzes the ATP-dependent conversion of 7-carboxy-7-deazaguanine (CDG) to 7-cyano-7-deazaguanine (preQ(0)). This is 7-cyano-7-deazaguanine synthase from Sulfurovum sp. (strain NBC37-1).